The sequence spans 204 residues: Large ribosomal subunit protein uL4 (204 aa).

Residues 56 to 79 (VSGTTAKPYGQKRTGRARQGSLRS) are disordered.

This sequence belongs to the universal ribosomal protein uL4 family. In terms of assembly, part of the 50S ribosomal subunit.

One of the primary rRNA binding proteins, this protein initially binds near the 5'-end of the 23S rRNA. It is important during the early stages of 50S assembly. It makes multiple contacts with different domains of the 23S rRNA in the assembled 50S subunit and ribosome. Its function is as follows. Forms part of the polypeptide exit tunnel. The sequence is that of Large ribosomal subunit protein uL4 from Wolbachia pipientis subsp. Culex pipiens (strain wPip).